A 546-amino-acid chain; its full sequence is Chaperonin GroEL 4 (546 aa).

ATP contacts are provided by residues 30–33 (TLGP), K51, 87–91 (DGTTT), G415, and D495. The tract at residues 524 to 546 (APKDTPAAGQPGGPGAGGPGLDF) is disordered. A compositionally biased stretch (gly residues) spans 533 to 546 (QPGGPGAGGPGLDF).

Belongs to the chaperonin (HSP60) family. As to quaternary structure, forms a cylinder of 14 subunits composed of two heptameric rings stacked back-to-back. Interacts with the co-chaperonin GroES.

It localises to the cytoplasm. It carries out the reaction ATP + H2O + a folded polypeptide = ADP + phosphate + an unfolded polypeptide.. Together with its co-chaperonin GroES, plays an essential role in assisting protein folding. The GroEL-GroES system forms a nano-cage that allows encapsulation of the non-native substrate proteins and provides a physical environment optimized to promote and accelerate protein folding. In Paraburkholderia xenovorans (strain LB400), this protein is Chaperonin GroEL 4.